The sequence spans 684 residues: Endo-1,4-beta-xylanase A (684 aa).

A signal peptide spans 1–34 (MMRSLKSRKLVFILAMLFLINAIVSLKFITYSSA). CBM-cenC domains are found at residues 40–190 (KSKY…IKDL) and 193–342 (AYVL…ISDE). In terms of domain architecture, GH10 spans 350-678 (DYNLPSLCEK…KFAFWSLIDP (329 aa)). The active-site Proton donor is the Glu-490. Glu-598 functions as the Nucleophile in the catalytic mechanism.

It belongs to the glycosyl hydrolase 10 (cellulase F) family.

The catalysed reaction is Endohydrolysis of (1-&gt;4)-beta-D-xylosidic linkages in xylans.. It participates in glycan degradation; xylan degradation. The chain is Endo-1,4-beta-xylanase A (xynA) from Caldicellulosiruptor sp. (strain Rt8B.4).